A 147-amino-acid chain; its full sequence is Large ribosomal subunit protein uL15 (147 aa).

Residues 21–49 are disordered; sequence RVGRGEGSKGKTAGRGTKGTKARAPVRPG.

This sequence belongs to the universal ribosomal protein uL15 family. In terms of assembly, part of the 50S ribosomal subunit.

In terms of biological role, binds to the 23S rRNA. The polypeptide is Large ribosomal subunit protein uL15 (Tropheryma whipplei (strain TW08/27) (Whipple's bacillus)).